Reading from the N-terminus, the 738-residue chain is Conserved oligomeric Golgi complex subunit 4 (738 aa).

The protein belongs to the COG4 family. As to quaternary structure, component of the conserved oligomeric Golgi complex which is composed of eight different subunits and is required for normal Golgi morphology and localization. Interacts with COG2 and COG3.

It localises to the golgi apparatus membrane. Its function is as follows. Required for normal Golgi function. This is Conserved oligomeric Golgi complex subunit 4 from Arabidopsis thaliana (Mouse-ear cress).